The following is a 266-amino-acid chain: Ribosomal RNA small subunit methyltransferase J (266 aa).

Residues 109–110 (RD), 125–126 (ER), and Asp-185 each bind S-adenosyl-L-methionine.

It belongs to the methyltransferase superfamily. RsmJ family.

It is found in the cytoplasm. The catalysed reaction is guanosine(1516) in 16S rRNA + S-adenosyl-L-methionine = N(2)-methylguanosine(1516) in 16S rRNA + S-adenosyl-L-homocysteine + H(+). In terms of biological role, specifically methylates the guanosine in position 1516 of 16S rRNA. The sequence is that of Ribosomal RNA small subunit methyltransferase J from Cellvibrio japonicus (strain Ueda107) (Pseudomonas fluorescens subsp. cellulosa).